Reading from the N-terminus, the 322-residue chain is Ferredoxin--NADP reductase (322 aa).

FAD-binding residues include Asp34, Gln42, Tyr47, Val87, Phe120, Asp279, and Thr320.

It belongs to the ferredoxin--NADP reductase type 2 family. As to quaternary structure, homodimer. FAD serves as cofactor.

The catalysed reaction is 2 reduced [2Fe-2S]-[ferredoxin] + NADP(+) + H(+) = 2 oxidized [2Fe-2S]-[ferredoxin] + NADPH. This is Ferredoxin--NADP reductase from Streptococcus gordonii (strain Challis / ATCC 35105 / BCRC 15272 / CH1 / DL1 / V288).